The following is a 315-amino-acid chain: Ribosomal RNA small subunit methyltransferase H (315 aa).

S-adenosyl-L-methionine-binding positions include 35–37 (GGH), Asp-55, Phe-79, Asp-101, and Gln-108.

It belongs to the methyltransferase superfamily. RsmH family.

Its subcellular location is the cytoplasm. It carries out the reaction cytidine(1402) in 16S rRNA + S-adenosyl-L-methionine = N(4)-methylcytidine(1402) in 16S rRNA + S-adenosyl-L-homocysteine + H(+). Its function is as follows. Specifically methylates the N4 position of cytidine in position 1402 (C1402) of 16S rRNA. This chain is Ribosomal RNA small subunit methyltransferase H, found in Photobacterium profundum (strain SS9).